The chain runs to 351 residues: Molybdenum import ATP-binding protein ModC (351 aa).

The ABC transporter domain occupies 1–229 (MLQINVKKQL…PIFAPWKGES (229 aa)). An ATP-binding site is contributed by 31–38 (GLSGSGKT). Positions 289-351 (QTSIRNILRG…YVQIKAVSVM (63 aa)) constitute a Mop domain.

It belongs to the ABC transporter superfamily. Molybdate importer (TC 3.A.1.8) family. In terms of assembly, the complex is composed of two ATP-binding proteins (ModC), two transmembrane proteins (ModB) and a solute-binding protein (ModA).

It localises to the cell inner membrane. It carries out the reaction molybdate(out) + ATP + H2O = molybdate(in) + ADP + phosphate + H(+). Part of the ABC transporter complex ModABC involved in molybdenum import. Responsible for energy coupling to the transport system. The polypeptide is Molybdenum import ATP-binding protein ModC (Haemophilus influenzae (strain ATCC 51907 / DSM 11121 / KW20 / Rd)).